Here is a 141-residue protein sequence, read N- to C-terminus: VLSAADKTNVKGIFAKIGGHGDDYGAETLDRMFTVYPQTKTYFPHFDVSHGSAQIKAHGKKVVAALVEAVNHIDDIAGALSKLSDLHAHKLRVDPANFKLLGQCFLVVVGIHHASALTPEVHASLDKFLCAVSTVLTAKYR.

Residues 1–141 form the Globin domain; that stretch reads VLSAADKTNV…VSTVLTAKYR (141 aa). Histidine 58 lines the O2 pocket. Histidine 87 is a binding site for heme b.

It belongs to the globin family. As to quaternary structure, heterotetramer of two alpha chains and two beta chains. As to expression, red blood cells.

Involved in oxygen transport from the lung to the various peripheral tissues. The polypeptide is Hemoglobin subunit alpha-A (HBAA) (Eudynamys scolopaceus (Western koel)).